A 301-amino-acid polypeptide reads, in one-letter code: GTPase Era (301 aa).

One can recognise an Era-type G domain in the interval 7–175 (YCGFIAIVGR…AAIVRKHLPE (169 aa)). The G1 stretch occupies residues 15-22 (GRPNVGKS). 15 to 22 (GRPNVGKS) is a binding site for GTP. Residues 41 to 45 (QTTRH) form a G2 region. Positions 62–65 (DTPG) are G3. GTP contacts are provided by residues 62-66 (DTPGL) and 124-127 (NKVD). Positions 124–127 (NKVD) are G4. A G5 region spans residues 154-156 (ISA). The 78-residue stretch at 206-283 (LGAELPYSVT…HLELWVKVKS (78 aa)) folds into the KH type-2 domain.

It belongs to the TRAFAC class TrmE-Era-EngA-EngB-Septin-like GTPase superfamily. Era GTPase family. In terms of assembly, monomer.

It is found in the cytoplasm. The protein resides in the cell inner membrane. In terms of biological role, an essential GTPase that binds both GDP and GTP, with rapid nucleotide exchange. Plays a role in 16S rRNA processing and 30S ribosomal subunit biogenesis and possibly also in cell cycle regulation and energy metabolism. This is GTPase Era from Shigella flexneri.